A 526-amino-acid polypeptide reads, in one-letter code: Hyaluronidase-5 (526 aa).

The first 35 residues, 1 to 35 (MRVLYFKHSFFRSLLKSNGLPQTLLVFLLIPCYLT), serve as a signal peptide directing secretion. Intrachain disulfides connect C60-C351, C223-C237, C376-C387, C381-C435, and C437-C443. The Proton donor role is filled by E147. N-linked (GlcNAc...) asparagine glycosylation is found at N165 and N179.

The protein belongs to the glycosyl hydrolase 56 family. As to expression, expressed in testis, epididymal sperm and epididymides (at protein level). Expressed at highest levels in testis with lesser amounts in epididymal sperm.

The protein resides in the cell membrane. It is found in the cytoplasmic vesicle. The protein localises to the secretory vesicle. Its subcellular location is the acrosome membrane. It localises to the secreted. It catalyses the reaction Random hydrolysis of (1-&gt;4)-linkages between N-acetyl-beta-D-glucosamine and D-glucuronate residues in hyaluronate.. Catalyzes the hydrolysis of hyaluronan into smaller oligosaccharide fragments. Does not appear to be essential for fertilization. In Mus musculus (Mouse), this protein is Hyaluronidase-5.